Consider the following 407-residue polypeptide: Indoleamine 2,3-dioxygenase 1 (407 aa).

Heme b is bound at residue His-350. Residues 362 to 388 (SKQKPMGGHKSEEPSNTENRGTGGTDV) form a disordered region.

Belongs to the indoleamine 2,3-dioxygenase family. Monomer. It depends on heme b as a cofactor.

The protein resides in the cytoplasm. Its subcellular location is the cytosol. It carries out the reaction D-tryptophan + O2 = N-formyl-D-kynurenine. The enzyme catalyses L-tryptophan + O2 = N-formyl-L-kynurenine. With respect to regulation, activity is inhibited by and MTH-trp (methylthiohydantoin-DL-tryptophan), modestly inhibited by L-1MT (1-methyl-L-tryptophan) but not D-1MT (1-methyl-D-tryptophan). Functionally, catalyzes the first and rate limiting step of the catabolism of the essential amino acid tryptophan along the kynurenine pathway. Involved in the peripheral immune tolerance, contributing to maintain homeostasis by preventing autoimmunity or immunopathology that would result from uncontrolled and overreacting immune responses. Tryptophan shortage inhibits T lymphocytes division and accumulation of tryptophan catabolites induces T-cell apoptosis and differentiation of regulatory T-cells. Acts as a suppressor of anti-tumor immunity. Limits the growth of intracellular pathogens by depriving tryptophan. Protects the fetus from maternal immune rejection. The chain is Indoleamine 2,3-dioxygenase 1 from Rattus norvegicus (Rat).